Here is a 317-residue protein sequence, read N- to C-terminus: MTESKAPAVVHPPSMLRGDIDDPKLAAALRTLELTVKQKLDGVLHGDHLGLIPGPGSEPGESRLYQPGDDVRRMDWAVTARTTHPHVRQMIADRELETWLVVDMSASLDFGTACCEKRDLAVAAAAAITFLNSGGGNRLGALIANGAAMTRVPARTGRQHQHTMLRTIATMPQAPAGVRGDLAVAIDALRRPERRRGMAVIISDFLGPINWMRPLRAIAARHEVLAIEVLDPRDVELPDVGDVVLQDAESGVVREFSIDPALRDDFARAAAAHRADVARTIRGCGAPLLSLRTDRDWLADIVRFVASRRRGALAGHQ.

The protein to M.avium MAV169.

This is an uncharacterized protein from Mycobacterium tuberculosis (strain CDC 1551 / Oshkosh).